A 346-amino-acid polypeptide reads, in one-letter code: STE20-related kinase adapter protein stlk (346 aa).

The 289-residue stretch at 10–298 (YKLLEILKNG…ASKLMTHSFL (289 aa)) folds into the Protein kinase domain. ATP is bound by residues 16–24 (LKNGMIGTV) and K38.

It belongs to the protein kinase superfamily. STE Ser/Thr protein kinase family. STE20 subfamily.

The chain is STE20-related kinase adapter protein stlk from Drosophila melanogaster (Fruit fly).